Here is a 517-residue protein sequence, read N- to C-terminus: Bifunctional purine biosynthesis protein PurH (517 aa).

The MGS-like domain maps to 1–145 (MSPLALVSVS…KNHADVAVLV (145 aa)).

Belongs to the PurH family.

The enzyme catalyses (6R)-10-formyltetrahydrofolate + 5-amino-1-(5-phospho-beta-D-ribosyl)imidazole-4-carboxamide = 5-formamido-1-(5-phospho-D-ribosyl)imidazole-4-carboxamide + (6S)-5,6,7,8-tetrahydrofolate. It carries out the reaction IMP + H2O = 5-formamido-1-(5-phospho-D-ribosyl)imidazole-4-carboxamide. It participates in purine metabolism; IMP biosynthesis via de novo pathway; 5-formamido-1-(5-phospho-D-ribosyl)imidazole-4-carboxamide from 5-amino-1-(5-phospho-D-ribosyl)imidazole-4-carboxamide (10-formyl THF route): step 1/1. Its pathway is purine metabolism; IMP biosynthesis via de novo pathway; IMP from 5-formamido-1-(5-phospho-D-ribosyl)imidazole-4-carboxamide: step 1/1. This is Bifunctional purine biosynthesis protein PurH from Prochlorococcus marinus (strain MIT 9515).